The following is a 210-amino-acid chain: dITP/XTP pyrophosphatase (210 aa).

S19–K24 lines the substrate pocket. Mg(2+) is bound by residues D51 and D80. Residue D80 is the Proton acceptor of the active site. Residues S81, F166–D169, K189, and H194–R195 contribute to the substrate site.

It belongs to the HAM1 NTPase family. As to quaternary structure, homodimer. The cofactor is Mg(2+).

The catalysed reaction is XTP + H2O = XMP + diphosphate + H(+). The enzyme catalyses dITP + H2O = dIMP + diphosphate + H(+). It carries out the reaction ITP + H2O = IMP + diphosphate + H(+). In terms of biological role, pyrophosphatase that catalyzes the hydrolysis of nucleoside triphosphates to their monophosphate derivatives, with a high preference for the non-canonical purine nucleotides XTP (xanthosine triphosphate), dITP (deoxyinosine triphosphate) and ITP. Seems to function as a house-cleaning enzyme that removes non-canonical purine nucleotides from the nucleotide pool, thus preventing their incorporation into DNA/RNA and avoiding chromosomal lesions. The chain is dITP/XTP pyrophosphatase from Burkholderia mallei (strain ATCC 23344).